We begin with the raw amino-acid sequence, 305 residues long: PI-PLC X domain-containing protein 1 (305 aa).

A signal peptide spans 1 to 24; the sequence is MSMSTLRHFLWLGALLLATIQVSA. The PI-PLC X-box domain maps to 25–189; that stretch reads LPTAQDLICN…RLIVFVDSKA (165 aa). Residues His-53 and His-97 contribute to the active site. Asn-237 carries N-linked (GlcNAc...) asparagine glycosylation.

The protein localises to the secreted. The protein is PI-PLC X domain-containing protein 1 of Arthroderma benhamiae (strain ATCC MYA-4681 / CBS 112371) (Trichophyton mentagrophytes).